A 32-amino-acid polypeptide reads, in one-letter code: Photosystem I reaction center subunit XII (32 aa).

The chain crosses the membrane as a helical span at residues 10 to 27; it reads VVALVSAFVTGILALRLG.

It belongs to the PsaM family.

The protein resides in the plastid. It is found in the chloroplast thylakoid membrane. The protein is Photosystem I reaction center subunit XII of Staurastrum punctulatum (Green alga).